The sequence spans 413 residues: Aminopeptidase 2 (413 aa).

Glutamate 250, glutamate 316, glutamate 340, histidine 345, histidine 378, and aspartate 380 together coordinate a divalent metal cation.

It belongs to the peptidase M29 family. As to quaternary structure, homodimer. The cofactor is Co(2+). Requires Zn(2+) as cofactor. Mg(2+) is required as a cofactor.

In terms of biological role, broad specificity metal-dependent exopeptidase, releasing all N-terminal amino acids. This Geobacillus stearothermophilus (Bacillus stearothermophilus) protein is Aminopeptidase 2.